We begin with the raw amino-acid sequence, 264 residues long: Orotidine 5'-phosphate decarboxylase (264 aa).

Residues D40, K62–H64, D93–T102, Y214, and R233 contribute to the substrate site. Residue K95 is the Proton donor of the active site.

Belongs to the OMP decarboxylase family.

The catalysed reaction is orotidine 5'-phosphate + H(+) = UMP + CO2. It functions in the pathway pyrimidine metabolism; UMP biosynthesis via de novo pathway; UMP from orotate: step 2/2. This Schizosaccharomyces pombe (strain 972 / ATCC 24843) (Fission yeast) protein is Orotidine 5'-phosphate decarboxylase (ura4).